We begin with the raw amino-acid sequence, 255 residues long: Glutamate racemase (255 aa).

Residues 7–8 and 39–40 each bind substrate; these read DS and YG. Residue Cys-70 is the Proton donor/acceptor of the active site. Position 71 to 72 (71 to 72) interacts with substrate; that stretch reads NT. Catalysis depends on Cys-181, which acts as the Proton donor/acceptor. Residue 182 to 183 coordinates substrate; sequence TH.

It belongs to the aspartate/glutamate racemases family.

It carries out the reaction L-glutamate = D-glutamate. It participates in cell wall biogenesis; peptidoglycan biosynthesis. Functionally, provides the (R)-glutamate required for cell wall biosynthesis. The polypeptide is Glutamate racemase (Helicobacter pylori (strain HPAG1)).